The primary structure comprises 399 residues: Yellow-related salivary protein LJM11 (399 aa).

A signal peptide spans 1–18 (MKVFFSIFTLVLFQGTLG). Cys115 and Cys186 form a disulfide bridge. A glycan (N-linked (GlcNAc...) asparagine) is linked at Asn213. An intrachain disulfide couples Cys319 to Cys395. Residues Thr345, Asn360, and Phe362 each contribute to the serotonin site.

This sequence belongs to the major royal jelly protein family. As to expression, salivary gland (at protein level).

It localises to the secreted. Functionally, probably modulates blood feeding of sand flies on vertebrate species by binding and sequestering different mediators involved in the host response. Binds biogenic amines. Binds serotonin with high affinity. Binds adrenaline and noradrenaline. Binds dopamine and octopamine. Poorly binds histamine. Induces a delayed type hypersensitivity response in host tissues. Induces systemic Th1 immune response in the host. Immunogenic; elicits antibody production in the host. Functions as a chemoattractant for host neutrophils; likely acts through a G-protein-coupled receptor and effect is dependent on calcium influx. (Microbial infection) Modulates infection caused by Leishmania species in the host. The protein is Yellow-related salivary protein LJM11 of Lutzomyia longipalpis (Sand fly).